The sequence spans 76 residues: Small ribosomal subunit protein bS16 (76 aa).

It belongs to the bacterial ribosomal protein bS16 family.

This Helicobacter pylori (strain HPAG1) protein is Small ribosomal subunit protein bS16.